The primary structure comprises 479 residues: 3-phytase B (479 aa).

A signal peptide spans 1–19; that stretch reads MPRTSLLTLACALATGASA. 5 cysteine pairs are disulfide-bonded: Cys71-Cys387, Cys128-Cys472, Cys216-Cys441, Cys225-Cys298, and Cys413-Cys421. His82 serves as the catalytic Nucleophile. Asn191 is a glycosylation site (N-linked (GlcNAc...) asparagine). An N-linked (GlcNAc...) asparagine glycan is attached at Asn315. Asp338 acts as the Proton donor in catalysis. Asn458 carries an N-linked (GlcNAc...) asparagine glycan.

Belongs to the histidine acid phosphatase family. As to quaternary structure, homodimer.

It catalyses the reaction 1D-myo-inositol hexakisphosphate + H2O = 1D-myo-inositol 1,2,4,5,6-pentakisphosphate + phosphate. In terms of biological role, catalyzes the hydrolysis of inorganic orthophosphate from phytate. This is 3-phytase B (phyB) from Aspergillus awamori (Black koji mold).